Consider the following 668-residue polypeptide: DNA ligase (668 aa).

NAD(+) is bound by residues 32–36 (DAEYD), 81–82 (SL), and E113. K115 functions as the N6-AMP-lysine intermediate in the catalytic mechanism. Residues R136, E173, K289, and K313 each coordinate NAD(+). Zn(2+) is bound by residues C407, C410, C425, and C431. One can recognise a BRCT domain in the interval 590–668 (ASEQPFAGKT…EEELQQALQG (79 aa)).

This sequence belongs to the NAD-dependent DNA ligase family. LigA subfamily. Requires Mg(2+) as cofactor. Mn(2+) serves as cofactor.

It catalyses the reaction NAD(+) + (deoxyribonucleotide)n-3'-hydroxyl + 5'-phospho-(deoxyribonucleotide)m = (deoxyribonucleotide)n+m + AMP + beta-nicotinamide D-nucleotide.. DNA ligase that catalyzes the formation of phosphodiester linkages between 5'-phosphoryl and 3'-hydroxyl groups in double-stranded DNA using NAD as a coenzyme and as the energy source for the reaction. It is essential for DNA replication and repair of damaged DNA. The sequence is that of DNA ligase from Aeromonas hydrophila subsp. hydrophila (strain ATCC 7966 / DSM 30187 / BCRC 13018 / CCUG 14551 / JCM 1027 / KCTC 2358 / NCIMB 9240 / NCTC 8049).